A 421-amino-acid polypeptide reads, in one-letter code: Glucose-1-phosphate adenylyltransferase (421 aa).

Alpha-D-glucose 1-phosphate-binding positions include tyrosine 109, glycine 175, 190–191 (EK), and serine 208.

Belongs to the bacterial/plant glucose-1-phosphate adenylyltransferase family. In terms of assembly, homotetramer.

The enzyme catalyses alpha-D-glucose 1-phosphate + ATP + H(+) = ADP-alpha-D-glucose + diphosphate. It participates in glycan biosynthesis; glycogen biosynthesis. Functionally, involved in the biosynthesis of ADP-glucose, a building block required for the elongation reactions to produce glycogen. Catalyzes the reaction between ATP and alpha-D-glucose 1-phosphate (G1P) to produce pyrophosphate and ADP-Glc. The protein is Glucose-1-phosphate adenylyltransferase of Teredinibacter turnerae (strain ATCC 39867 / T7901).